A 403-amino-acid polypeptide reads, in one-letter code: Argininosuccinate synthase (403 aa).

Residues 10-18 (AYSGGVDTS) and Ala-38 each bind ATP. Tyr-89 is a binding site for L-citrulline. Gly-119 contacts ATP. L-aspartate contacts are provided by Thr-121, Asn-125, and Asp-126. An L-citrulline-binding site is contributed by Asn-125. Residues Arg-129, Ser-177, Ser-186, Glu-262, and Tyr-274 each contribute to the L-citrulline site.

The protein belongs to the argininosuccinate synthase family. Type 1 subfamily. In terms of assembly, homotetramer.

The protein localises to the cytoplasm. It carries out the reaction L-citrulline + L-aspartate + ATP = 2-(N(omega)-L-arginino)succinate + AMP + diphosphate + H(+). Its pathway is amino-acid biosynthesis; L-arginine biosynthesis; L-arginine from L-ornithine and carbamoyl phosphate: step 2/3. The protein is Argininosuccinate synthase of Parasynechococcus marenigrum (strain WH8102).